Consider the following 822-residue polypeptide: Fibroblast growth factor receptor 1 (822 aa).

The signal sequence occupies residues 1–21 (MWGWKCLLFWAVLVTATLCTA). The Extracellular portion of the chain corresponds to 22-376 (RPAPTLPEQA…AVMTSPLYLE (355 aa)). An Ig-like C2-type 1 domain is found at 25–119 (PTLPEQAQPW…DTTYFSVNVS (95 aa)). Cysteines 55 and 101 form a disulfide. N-linked (GlcNAc...) asparagine glycosylation is found at Asn77 and Asn117. The disordered stretch occupies residues 120 to 162 (DALPSSEDDDDDDDSSSEEKETDNTKPNRRPVAPYWTSPEKME). Residues 125-135 (SEDDDDDDDSS) show a composition bias toward acidic residues. The span at 136-145 (SEEKETDNTK) shows a compositional bias: basic and acidic residues. Ig-like C2-type domains are found at residues 158 to 246 (PEKM…YQLD) and 255 to 357 (PILQ…AWLT). Residues 160–177 (KMEKKLHAVPAAKTVKFK) form a heparin-binding region. A disulfide bond links Cys178 and Cys230. N-linked (GlcNAc...) asparagine glycosylation is found at Asn227, Asn240, Asn264, Asn296, Asn317, and Asn330. Cys277 and Cys341 form a disulfide bridge. A helical membrane pass occupies residues 377 to 397 (IIIYCTGAFLISCMLGSVIIY). At 398-822 (KMKSGTKKSD…QLANSGLKRR (425 aa)) the chain is on the cytoplasmic side. Residue Tyr463 is modified to Phosphotyrosine; by autocatalysis. The Protein kinase domain occupies 478–767 (LVLGKPLGEG…VALTSNQEYL (290 aa)). Residues 484–490 (LGEGCFG), Lys514, 562–564 (EYA), and Asn568 each bind ATP. Phosphotyrosine; by autocatalysis occurs at positions 583 and 585. The active-site Proton acceptor is Asp623. ATP is bound by residues Arg627 and Asp641. A phosphotyrosine; by autocatalysis mark is found at Tyr653, Tyr654, Tyr730, and Tyr766. Residues 782 to 792 (DTRSSTCSSGE) show a composition bias toward polar residues. The tract at residues 782 to 822 (DTRSSTCSSGEDSVFSHEPLPEEPCLPRHPTQLANSGLKRR) is disordered.

The protein belongs to the protein kinase superfamily. Tyr protein kinase family. Fibroblast growth factor receptor subfamily. In terms of assembly, monomer. Homodimer after ligand binding. Interacts predominantly with FGF1 and FGF2, but can also interact with FGF3, FGF4, FGF5, FGF6, FGF8, FGF10, FGF19, FGF21, FGF22 and FGF23 (in vitro). Ligand specificity is determined by tissue-specific expression of isoforms, and differences in the third Ig-like domain are crucial for ligand specificity. Affinity for fibroblast growth factors (FGFs) is increased by heparan sulfate glycosaminoglycans that function as coreceptors. Likewise, KLB increases the affinity for FGF19, FGF21 and FGF23. Interacts (phosphorylated on Tyr-766) with PLCG1 (via SH2 domains). Interacts with FRS2. Interacts with RPS6KA1. Interacts (via C-terminus) with NEDD4 (via WW3 domain). Interacts with KL. Interacts with SHB (via SH2 domain). Interacts with GRB10. Interacts with ANOS1; this interaction does not interfere with FGF2-binding to FGFR1, but prevents binding of heparin-bound FGF2. Interacts with SOX2 and SOX3. Interacts with FLRT1, FLRT2 and FLRT3. Found in a ternary complex with FGF1 and ITGAV:ITGB3. Autophosphorylated. Binding of FGF family members together with heparan sulfate proteoglycan or heparin promotes receptor dimerization and autophosphorylation on tyrosine residues. Autophosphorylation occurs in trans between the two FGFR molecules present in the dimer and proceeds in a highly ordered manner. Initial autophosphorylation at Tyr-653 increases the kinase activity by a factor of 50 to 100. After this, Tyr-583 becomes phosphorylated, followed by phosphorylation of Tyr-463, Tyr-766, Tyr-583 and Tyr-585. In a third stage, Tyr-654 is autophosphorylated, resulting in a further tenfold increase of kinase activity. Phosphotyrosine residues provide docking sites for interacting proteins and so are crucial for FGFR1 function and its regulation. In terms of processing, ubiquitinated. FGFR1 is rapidly ubiquitinated by NEDD4 after autophosphorylation, leading to internalization and lysosomal degradation. CBL is recruited to activated FGFR1 via FRS2 and GRB2, and mediates ubiquitination and subsequent degradation of FGFR1. Post-translationally, N-glycosylated in the endoplasmic reticulum. The N-glycan chains undergo further maturation to an Endo H-resistant form in the Golgi apparatus. In terms of tissue distribution, widely expressed.

It is found in the cell membrane. The protein localises to the nucleus. The protein resides in the cytoplasm. Its subcellular location is the cytosol. It localises to the cytoplasmic vesicle. It catalyses the reaction L-tyrosyl-[protein] + ATP = O-phospho-L-tyrosyl-[protein] + ADP + H(+). Present in an inactive conformation in the absence of bound ligand. Ligand binding leads to dimerization and activation by sequential autophosphorylation on tyrosine residues. Its function is as follows. Tyrosine-protein kinase that acts as a cell-surface receptor for fibroblast growth factors and plays an essential role in the regulation of embryonic development, cell proliferation, differentiation and migration. Required for normal mesoderm patterning and correct axial organization during embryonic development, normal skeletogenesis and normal development of the gonadotropin-releasing hormone (GnRH) neuronal system. Phosphorylates PLCG1, FRS2, GAB1 and SHB. Ligand binding leads to the activation of several signaling cascades. Activation of PLCG1 leads to the production of the cellular signaling molecules diacylglycerol and inositol 1,4,5-trisphosphate. Phosphorylation of FRS2 triggers recruitment of GRB2, GAB1, PIK3R1 and SOS1, and mediates activation of RAS, MAPK1/ERK2, MAPK3/ERK1 and the MAP kinase signaling pathway, as well as of the AKT1 signaling pathway. Promotes phosphorylation of SHC1, STAT1 and PTPN11/SHP2. In the nucleus, enhances RPS6KA1 and CREB1 activity and contributes to the regulation of transcription. FGFR1 signaling is down-regulated by IL17RD/SEF, and by FGFR1 ubiquitination, internalization and degradation. In Mus musculus (Mouse), this protein is Fibroblast growth factor receptor 1 (Fgfr1).